Here is a 453-residue protein sequence, read N- to C-terminus: UPF0210 protein Pcar_2119 (453 aa).

The protein belongs to the UPF0210 family. In terms of assembly, homodimer.

The protein is UPF0210 protein Pcar_2119 of Syntrophotalea carbinolica (strain DSM 2380 / NBRC 103641 / GraBd1) (Pelobacter carbinolicus).